Reading from the N-terminus, the 20-residue chain is Protein YfiS (20 aa).

The polypeptide is Protein YfiS (Escherichia coli (strain K12)).